Reading from the N-terminus, the 344-residue chain is Arginine N-succinyltransferase (344 aa).

Leu-125 contributes to the succinyl-CoA binding site. Catalysis depends on His-229, which acts as the Proton donor.

Belongs to the arginine N-succinyltransferase family.

It catalyses the reaction succinyl-CoA + L-arginine = N(2)-succinyl-L-arginine + CoA + H(+). It functions in the pathway amino-acid degradation; L-arginine degradation via AST pathway; L-glutamate and succinate from L-arginine: step 1/5. Functionally, catalyzes the transfer of succinyl-CoA to arginine to produce N(2)-succinylarginine. This chain is Arginine N-succinyltransferase, found in Escherichia coli O17:K52:H18 (strain UMN026 / ExPEC).